Here is a 436-residue protein sequence, read N- to C-terminus: 3-ketoacyl-CoA thiolase (436 aa).

Cysteine 99 acts as the Acyl-thioester intermediate in catalysis. Active-site proton acceptor residues include histidine 392 and cysteine 422.

The protein belongs to the thiolase-like superfamily. Thiolase family. As to quaternary structure, heterotetramer of two alpha chains (FadJ) and two beta chains (FadI).

The protein localises to the cytoplasm. It catalyses the reaction an acyl-CoA + acetyl-CoA = a 3-oxoacyl-CoA + CoA. Its pathway is lipid metabolism; fatty acid beta-oxidation. Its function is as follows. Catalyzes the final step of fatty acid oxidation in which acetyl-CoA is released and the CoA ester of a fatty acid two carbons shorter is formed. This Yersinia pseudotuberculosis serotype O:1b (strain IP 31758) protein is 3-ketoacyl-CoA thiolase.